Reading from the N-terminus, the 215-residue chain is Sodium channel regulatory subunit beta-3 (215 aa).

The N-terminal stretch at Met-1–Cys-22 is a signal peptide. Topologically, residues Phe-23–Val-156 are extracellular. Disulfide bonds link Cys-26–Cys-48 and Cys-45–Cys-120. Positions Glu-32–Thr-154 constitute an Ig-like C2-type domain. Residues Asn-95, Asn-109, Asn-113, and Asn-121 are each glycosylated (N-linked (GlcNAc...) asparagine). Residues Val-157–Ile-178 traverse the membrane as a helical segment. The Cytoplasmic segment spans residues Tyr-179–Glu-215.

The protein belongs to the sodium channel auxiliary subunit SCN3B (TC 8.A.17) family. A voltage-gated sodium (Nav) channel consists of an ion-conducting pore-forming alpha subunit functional on its own that is regulated by one or more beta subunits. Forms homodimers and homotrimers. SCN3B is non-covalently associated with alpha subunits and induces the formation of alpha subunit oligomers, including trimers. Interacts with SCN5A/Nav1.5; regulatory subunit of SCN5A/Nav1.5. Interacts with SCN7A/Nav2.1; probable regulatory subunit of SCN7A/Nav2.1. Interacts with SCN10A; regulatory subunit of SCN10A/Nav1.8. Interacts with NFASC; probably involved in targeting the sodium channels to the nodes of Ranvier. Post-translationally, intramolecular disulfide bonds favor the voltage-gated sodium channel oligomeric complex assembly. In terms of processing, N-glycosylated.

It localises to the cell membrane. Its function is as follows. Regulatory subunit of multiple voltage-gated sodium (Nav) channels directly mediating the depolarization of excitable membranes. Navs, also called VGSCs (voltage-gated sodium channels) or VDSCs (voltage-dependent sodium channels), operate by switching between closed and open conformations depending on the voltage difference across the membrane. In the open conformation they allow Na(+) ions to selectively pass through the pore, along their electrochemical gradient. The influx of Na+ ions provokes membrane depolarization, initiating the propagation of electrical signals throughout cells and tissues. The accessory beta subunits participate in localization and functional modulation of the Nav channels. Modulates the activity of SCN2A/Nav1.2, causing a hyperpolarizing shift in the voltage-dependence of inactivation of the channel and increasing the fraction of channels operating in the fast gating mode. Modulates the activity of SCN5A/Nav1.5. Could also regulate the atypical sodium channel SCN7A/Nav2.1. Modulates the activity of SCN10A/Nav1.8, regulating its oligomerization and accelerating the recovery from inactivation. The sequence is that of Sodium channel regulatory subunit beta-3 from Bos taurus (Bovine).